The sequence spans 139 residues: Tol-Pal system protein TolR (139 aa).

Residues isoleucine 15 to isoleucine 35 traverse the membrane as a helical segment.

This sequence belongs to the ExbD/TolR family. As to quaternary structure, the Tol-Pal system is composed of five core proteins: the inner membrane proteins TolA, TolQ and TolR, the periplasmic protein TolB and the outer membrane protein Pal. They form a network linking the inner and outer membranes and the peptidoglycan layer.

Its subcellular location is the cell inner membrane. In terms of biological role, part of the Tol-Pal system, which plays a role in outer membrane invagination during cell division and is important for maintaining outer membrane integrity. The sequence is that of Tol-Pal system protein TolR from Haemophilus influenzae (strain ATCC 51907 / DSM 11121 / KW20 / Rd).